We begin with the raw amino-acid sequence, 296 residues long: Glycine N-acyltransferase (296 aa).

N6-acetyllysine; alternate occurs at positions 16, 127, and 141. N6-succinyllysine; alternate occurs at positions 16, 127, and 141. Lys159 is modified (N6-acetyllysine). Lys169 carries the post-translational modification N6-succinyllysine. Lys183 and Lys256 each carry N6-acetyllysine; alternate. N6-succinyllysine; alternate occurs at positions 183 and 256.

The protein belongs to the glycine N-acyltransferase family.

It is found in the mitochondrion. The enzyme catalyses an acyl-CoA + glycine = an N-acylglycine + CoA + H(+). It catalyses the reaction benzoyl-CoA + glycine = N-benzoylglycine + CoA + H(+). Mitochondrial acyltransferase which transfers an acyl group to the N-terminus of glycine and glutamine, although much less efficiently. Can conjugate a multitude of substrates to form a variety of N-acylglycines, thereby detoxify xenobiotics, such as benzoic acid or salicylic acid, and endogenous organic acids, such as isovaleric acid. The protein is Glycine N-acyltransferase (GLYAT) of Pongo abelii (Sumatran orangutan).